Reading from the N-terminus, the 362-residue chain is Peptide chain release factor 1 (362 aa).

An N5-methylglutamine modification is found at Gln-235.

This sequence belongs to the prokaryotic/mitochondrial release factor family. In terms of processing, methylated by PrmC. Methylation increases the termination efficiency of RF1.

The protein resides in the cytoplasm. Peptide chain release factor 1 directs the termination of translation in response to the peptide chain termination codons UAG and UAA. The sequence is that of Peptide chain release factor 1 from Acinetobacter baylyi (strain ATCC 33305 / BD413 / ADP1).